A 182-amino-acid polypeptide reads, in one-letter code: CASP-like protein 2B1 (182 aa).

Residues 1–12 (MKLIDRRMRLTE) are Cytoplasmic-facing. The chain crosses the membrane as a helical span at residues 13 to 31 (LLLRCSISVFALLALILVV). Residues 32-52 (TDTEVKLIFTIKKTAKYTDMK) are Extracellular-facing. A helical membrane pass occupies residues 53–73 (AVVFLVVANGIAAVYSLLQSV). At 74–89 (RCVVGTMKGKVLFSKP) the chain is on the cytoplasmic side. A helical membrane pass occupies residues 90-110 (LAWAFFSGDQAMAYLNVAAIA). At 111–141 (ATAESGVIAREGEEDLQWMRVCTMYGKFCNQ) the chain is on the extracellular side. Residues 142–162 (MAIGVSSALLASIAMVFVSCI) form a helical membrane-spanning segment. Residues 163–182 (SAFSLFRLYGATKDRRTTPW) lie on the Cytoplasmic side of the membrane.

This sequence belongs to the Casparian strip membrane proteins (CASP) family. Homodimer and heterodimers.

Its subcellular location is the cell membrane. The sequence is that of CASP-like protein 2B1 from Arabidopsis thaliana (Mouse-ear cress).